The sequence spans 314 residues: 4-hydroxy-3-methylbut-2-enyl diphosphate reductase (314 aa).

[4Fe-4S] cluster is bound at residue Cys12. His41 and His74 together coordinate (2E)-4-hydroxy-3-methylbut-2-enyl diphosphate. The dimethylallyl diphosphate site is built by His41 and His74. 2 residues coordinate isopentenyl diphosphate: His41 and His74. Cys96 provides a ligand contact to [4Fe-4S] cluster. His124 is a (2E)-4-hydroxy-3-methylbut-2-enyl diphosphate binding site. His124 contributes to the dimethylallyl diphosphate binding site. His124 provides a ligand contact to isopentenyl diphosphate. Glu126 acts as the Proton donor in catalysis. A (2E)-4-hydroxy-3-methylbut-2-enyl diphosphate-binding site is contributed by Thr167. Cys197 provides a ligand contact to [4Fe-4S] cluster. Positions 225, 226, 227, and 269 each coordinate (2E)-4-hydroxy-3-methylbut-2-enyl diphosphate. 4 residues coordinate dimethylallyl diphosphate: Ser225, Ser226, Asn227, and Ser269. Residues Ser225, Ser226, Asn227, and Ser269 each contribute to the isopentenyl diphosphate site.

It belongs to the IspH family. The cofactor is [4Fe-4S] cluster.

The enzyme catalyses isopentenyl diphosphate + 2 oxidized [2Fe-2S]-[ferredoxin] + H2O = (2E)-4-hydroxy-3-methylbut-2-enyl diphosphate + 2 reduced [2Fe-2S]-[ferredoxin] + 2 H(+). It catalyses the reaction dimethylallyl diphosphate + 2 oxidized [2Fe-2S]-[ferredoxin] + H2O = (2E)-4-hydroxy-3-methylbut-2-enyl diphosphate + 2 reduced [2Fe-2S]-[ferredoxin] + 2 H(+). It functions in the pathway isoprenoid biosynthesis; dimethylallyl diphosphate biosynthesis; dimethylallyl diphosphate from (2E)-4-hydroxy-3-methylbutenyl diphosphate: step 1/1. It participates in isoprenoid biosynthesis; isopentenyl diphosphate biosynthesis via DXP pathway; isopentenyl diphosphate from 1-deoxy-D-xylulose 5-phosphate: step 6/6. Functionally, catalyzes the conversion of 1-hydroxy-2-methyl-2-(E)-butenyl 4-diphosphate (HMBPP) into a mixture of isopentenyl diphosphate (IPP) and dimethylallyl diphosphate (DMAPP). Acts in the terminal step of the DOXP/MEP pathway for isoprenoid precursor biosynthesis. This is 4-hydroxy-3-methylbut-2-enyl diphosphate reductase from Actinobacillus succinogenes (strain ATCC 55618 / DSM 22257 / CCUG 43843 / 130Z).